A 379-amino-acid polypeptide reads, in one-letter code: Succinyl-diaminopimelate desuccinylase (379 aa).

His-70 is a Zn(2+) binding site. Asp-72 is an active-site residue. Residue Asp-103 participates in Zn(2+) binding. Glu-137 acts as the Proton acceptor in catalysis. Zn(2+) contacts are provided by Glu-138, Glu-166, and His-352.

This sequence belongs to the peptidase M20A family. DapE subfamily. In terms of assembly, homodimer. The cofactor is Zn(2+). It depends on Co(2+) as a cofactor.

It carries out the reaction N-succinyl-(2S,6S)-2,6-diaminopimelate + H2O = (2S,6S)-2,6-diaminopimelate + succinate. Its pathway is amino-acid biosynthesis; L-lysine biosynthesis via DAP pathway; LL-2,6-diaminopimelate from (S)-tetrahydrodipicolinate (succinylase route): step 3/3. Functionally, catalyzes the hydrolysis of N-succinyl-L,L-diaminopimelic acid (SDAP), forming succinate and LL-2,6-diaminopimelate (DAP), an intermediate involved in the bacterial biosynthesis of lysine and meso-diaminopimelic acid, an essential component of bacterial cell walls. The polypeptide is Succinyl-diaminopimelate desuccinylase (Burkholderia vietnamiensis (strain G4 / LMG 22486) (Burkholderia cepacia (strain R1808))).